The chain runs to 346 residues: MAEITAKLVKELREKSGAGVMDAKKALVETDGDMDKAIELLREKGMAKAAKKADRVAAEGLTGVYVSGNYAAVVEVNAETDFVAKNAQFVELVNDTAKTIAEGKPANNEEALNLIMPSGETLAAAYVNATATIGEKISFRRFSLLEKTDEQHFGAYQHNGGRIGVISVIEGGDDALAKQVSMHIAAMKPTVLSYTELDPQFVKDELAKLNHNIELDNESRAMVDKAPLPFLQYGSKAQLSEDVIAKAEEDIKAELAAEGKPEKIWDKIIPGKMDRFMLDNTKVDQAYTLLAQVYIMDDSKTVEAYLDSVNAKAIAFARFEVGEGIEKKANDFESEVAATMAAALNN.

Residues 80 to 83 form an involved in Mg(2+) ion dislocation from EF-Tu region; sequence TDFV.

It belongs to the EF-Ts family.

The protein resides in the cytoplasm. Its function is as follows. Associates with the EF-Tu.GDP complex and induces the exchange of GDP to GTP. It remains bound to the aminoacyl-tRNA.EF-Tu.GTP complex up to the GTP hydrolysis stage on the ribosome. In Streptococcus uberis (strain ATCC BAA-854 / 0140J), this protein is Elongation factor Ts.